The sequence spans 159 residues: MPSFDVVSELDKHELTNAVDNAIKELDRRFDLKGKCSFEAKDKSVTLTAEADFMLEQMLDILRSNLVKRKVDSQCMEVKDAYPSGKVVKQEVNFREGIDKDLAKKIVGLIKERKLKVQAAIQGEQVRVTGKKRDDLQEAIALLRGESLGMPLQFTNFRD.

This sequence belongs to the YajQ family.

Nucleotide-binding protein. In Pseudomonas paraeruginosa (strain DSM 24068 / PA7) (Pseudomonas aeruginosa (strain PA7)), this protein is Nucleotide-binding protein PSPA7_4966.